The primary structure comprises 260 residues: Cystine transporter (260 aa).

Residues M1–D67 form the PQ-loop 1 domain. The next 5 helical transmembrane spans lie at I7 to W28, F40 to W62, F81 to A102, W118 to M138, and T151 to T175. Residues K162–D212 form the PQ-loop 2 domain. N-linked (GlcNAc...) asparagine glycosylation is present at N177. 2 consecutive transmembrane segments (helical) span residues C185–L205 and V227–Y247.

The protein belongs to the cystinosin family.

It localises to the endosome membrane. The protein localises to the vacuole membrane. The catalysed reaction is L-cystine(out) + H(+)(out) = L-cystine(in) + H(+)(in). Cystine/H(+) symporter that mediates export of cystine, the oxidized dimer of cysteine, from vacuoles/endodomes. The sequence is that of Cystine transporter (ERS1) from Saccharomyces cerevisiae (strain ATCC 204508 / S288c) (Baker's yeast).